We begin with the raw amino-acid sequence, 273 residues long: Large ribosomal subunit protein uL2 (273 aa).

Disordered stretches follow at residues 28-53 (KPFA…TTRH) and 221-273 (RGTA…RRSK). Residues 39–48 (KSGGRNNNGR) are compositionally biased toward low complexity. The residue at position 242 (K242) is an N6-acetyllysine.

The protein belongs to the universal ribosomal protein uL2 family. Part of the 50S ribosomal subunit. Forms a bridge to the 30S subunit in the 70S ribosome.

One of the primary rRNA binding proteins. Required for association of the 30S and 50S subunits to form the 70S ribosome, for tRNA binding and peptide bond formation. It has been suggested to have peptidyltransferase activity; this is somewhat controversial. Makes several contacts with the 16S rRNA in the 70S ribosome. This Escherichia coli (strain SE11) protein is Large ribosomal subunit protein uL2.